The primary structure comprises 251 residues: uncharacterized protein (251 aa).

This sequence belongs to the FAM243 family.

This is an uncharacterized protein from Mus musculus (Mouse).